The sequence spans 214 residues: Holliday junction branch migration complex subunit RuvA (214 aa).

The tract at residues M1–D68 is domain I. The interval S69–G146 is domain II. The tract at residues A147 to P160 is flexible linker. The interval I161–A214 is domain III.

This sequence belongs to the RuvA family. In terms of assembly, homotetramer. Forms an RuvA(8)-RuvB(12)-Holliday junction (HJ) complex. HJ DNA is sandwiched between 2 RuvA tetramers; dsDNA enters through RuvA and exits via RuvB. An RuvB hexamer assembles on each DNA strand where it exits the tetramer. Each RuvB hexamer is contacted by two RuvA subunits (via domain III) on 2 adjacent RuvB subunits; this complex drives branch migration. In the full resolvosome a probable DNA-RuvA(4)-RuvB(12)-RuvC(2) complex forms which resolves the HJ.

It localises to the cytoplasm. Its function is as follows. The RuvA-RuvB-RuvC complex processes Holliday junction (HJ) DNA during genetic recombination and DNA repair, while the RuvA-RuvB complex plays an important role in the rescue of blocked DNA replication forks via replication fork reversal (RFR). RuvA specifically binds to HJ cruciform DNA, conferring on it an open structure. The RuvB hexamer acts as an ATP-dependent pump, pulling dsDNA into and through the RuvAB complex. HJ branch migration allows RuvC to scan DNA until it finds its consensus sequence, where it cleaves and resolves the cruciform DNA. The polypeptide is Holliday junction branch migration complex subunit RuvA (Desulforapulum autotrophicum (strain ATCC 43914 / DSM 3382 / VKM B-1955 / HRM2) (Desulfobacterium autotrophicum)).